Consider the following 217-residue polypeptide: Large ribosomal subunit protein uL1 (217 aa).

This sequence belongs to the universal ribosomal protein uL1 family. In terms of assembly, part of the 50S ribosomal subunit.

Functionally, binds directly to 23S rRNA. Probably involved in E site tRNA release. In terms of biological role, protein L1 is also a translational repressor protein, it controls the translation of its operon by binding to its mRNA. In Thermoplasma volcanium (strain ATCC 51530 / DSM 4299 / JCM 9571 / NBRC 15438 / GSS1), this protein is Large ribosomal subunit protein uL1.